We begin with the raw amino-acid sequence, 548 residues long: 4-methyl-5-nitrocatechol 5-monooxygenase (548 aa).

It belongs to the PheA/TfdB FAD monooxygenase family. As to quaternary structure, monomer. The cofactor is FAD.

The catalysed reaction is 4-methyl-5-nitrocatechol + NADPH + O2 = 2-hydroxy-5-methylquinone + nitrite + NADP(+) + H2O + H(+). It carries out the reaction 4-methyl-5-nitrocatechol + NADH + O2 = 2-hydroxy-5-methylquinone + nitrite + NAD(+) + H2O + H(+). Its activity is regulated as follows. Activated by magnesium or manganese ions. Inhibited by concentrations of 4-methyl-5-nitrocatechol (MNC) above 2 mM. Involved in the degradation of 2,4-dinitrotoluene (2,4-DNT). Catalyzes the removal of the nitro group from 4-methyl-5-nitrocatechol (MNC) to yield 2-hydroxy-5-methylquinone. It can use both NADH and NADPH as electron donors, but prefers NADPH. Also able to use 4-nitrocatechol as substrate. The polypeptide is 4-methyl-5-nitrocatechol 5-monooxygenase (Burkholderia sp).